A 246-amino-acid chain; its full sequence is Pyridoxine 5'-phosphate synthase (246 aa).

A 3-amino-2-oxopropyl phosphate-binding site is contributed by N10. Residue 12–13 (DH) coordinates 1-deoxy-D-xylulose 5-phosphate. R21 contributes to the 3-amino-2-oxopropyl phosphate binding site. Catalysis depends on H46, which acts as the Proton acceptor. 1-deoxy-D-xylulose 5-phosphate-binding residues include R48 and H53. E73 (proton acceptor) is an active-site residue. T103 is a binding site for 1-deoxy-D-xylulose 5-phosphate. The Proton donor role is filled by H193. 3-amino-2-oxopropyl phosphate is bound by residues G194 and 215-216 (GH).

The protein belongs to the PNP synthase family. As to quaternary structure, homooctamer; tetramer of dimers.

The protein localises to the cytoplasm. The enzyme catalyses 3-amino-2-oxopropyl phosphate + 1-deoxy-D-xylulose 5-phosphate = pyridoxine 5'-phosphate + phosphate + 2 H2O + H(+). It participates in cofactor biosynthesis; pyridoxine 5'-phosphate biosynthesis; pyridoxine 5'-phosphate from D-erythrose 4-phosphate: step 5/5. Its function is as follows. Catalyzes the complicated ring closure reaction between the two acyclic compounds 1-deoxy-D-xylulose-5-phosphate (DXP) and 3-amino-2-oxopropyl phosphate (1-amino-acetone-3-phosphate or AAP) to form pyridoxine 5'-phosphate (PNP) and inorganic phosphate. The polypeptide is Pyridoxine 5'-phosphate synthase (Rhodopirellula baltica (strain DSM 10527 / NCIMB 13988 / SH1)).